Consider the following 403-residue polypeptide: Nuclear receptor subfamily 2 group F member 5 (403 aa).

Residues 16–44 (PGSQLQMCSQEPGGTPGTPSGSTPGNDAL) are disordered. The nuclear receptor DNA-binding region spans 51 to 126 (NVDCMVCGDK…VGMRREAVQR (76 aa)). 2 consecutive NR C4-type zinc fingers follow at residues 54–74 (CMVC…CEGC) and 90–114 (CRGN…LKKC). In terms of domain architecture, NR LBD spans 152–378 (YLSGFISLLL…TLLRDMLLSG (227 aa)).

Belongs to the nuclear hormone receptor family. NR2 subfamily.

The protein resides in the nucleus. Functionally, putative receptor that is required in photoreceptor cells precursors during eye development. The sequence is that of Nuclear receptor subfamily 2 group F member 5 (nr2f5) from Danio rerio (Zebrafish).